The sequence spans 116 residues: Fluoride-specific ion channel FluC 1 (116 aa).

The next 4 membrane-spanning stretches (helical) occupy residues 2-22 (LVLV…RYGI), 33-53 (PLPI…GWIL), 63-83 (IFLG…INEL), and 96-116 (WEYF…GTLI). Residues G71 and T74 each contribute to the Na(+) site.

It belongs to the fluoride channel Fluc/FEX (TC 1.A.43) family.

It localises to the cell membrane. The catalysed reaction is fluoride(in) = fluoride(out). With respect to regulation, na(+) is not transported, but it plays an essential structural role and its presence is essential for fluoride channel function. Functionally, fluoride-specific ion channel. Important for reducing fluoride concentration in the cell, thus reducing its toxicity. The protein is Fluoride-specific ion channel FluC 1 of Lactiplantibacillus plantarum (strain ATCC BAA-793 / NCIMB 8826 / WCFS1) (Lactobacillus plantarum).